A 190-amino-acid chain; its full sequence is GTP cyclohydrolase 1 (190 aa).

Zn(2+)-binding residues include Cys75, His78, and Cys146.

It belongs to the GTP cyclohydrolase I family. In terms of assembly, homomer.

The enzyme catalyses GTP + H2O = 7,8-dihydroneopterin 3'-triphosphate + formate + H(+). The protein operates within cofactor biosynthesis; 7,8-dihydroneopterin triphosphate biosynthesis; 7,8-dihydroneopterin triphosphate from GTP: step 1/1. The sequence is that of GTP cyclohydrolase 1 from Campylobacter lari (strain RM2100 / D67 / ATCC BAA-1060).